A 40-amino-acid chain; its full sequence is Cytolysin EnT (40 aa).

Positions 3-12 (ALAGTIIEGA) are plays an important role in the hemolytic activity. The segment at 11-30 (GASLTFSVLTTILDALGSVS) is N-terminal region.

Belongs to the actinoporin family. Sea anemone subfamily. As to quaternary structure, octamer or nonamer in membranes. Monomer in the soluble state.

It localises to the secreted. The protein localises to the nematocyst. Its subcellular location is the target cell membrane. In terms of biological role, pore-forming protein that forms cations-selective hydrophilic pores of around 1 nm and causes cytolysis. Pore formation is a multi-step process that involves specific recognition of membrane sphingomyelin (but neither cholesterol nor phosphatidylcholine) using aromatic rich region and adjacent phosphocholine (POC) binding site, firm binding to the membrane (mainly driven by hydrophobic interactions) accompanied by the transfer of the N-terminal region to the lipid-water interface and finally pore formation after oligomerization of monomers. This toxin shows hemolytic activities. In Entacmaea quadricolor (Bubble-tip anemone), this protein is Cytolysin EnT.